Consider the following 496-residue polypeptide: MEFSIKSGTPEKQRKDCVVVGVFEARKFSDAAAVLDRASQGYLGDILRTGDIDGKPGSTLLLHSVPGVAAGRVLLVGLGKERELDEHSYRKALRAAIKALHTLDDADVAICLAEVPVKKRDTAWRVAQVVEIAEDSTYRFDRFKSKPANGKKGIAKLQVHVTRRSDVAEGEKGLRQGKALAAGVSFAKDLGNLAPNYCTPSYLAEQAEALSDSHGLQVEVLEKEDIEKLGMGSFLGVTKGSVQPPKLIVLQHRKGKKSQKPVVLVGKGITFDTGGISLKPGADMDEMKYDMCGAASVLGTFKAIAELDLPLNVVGIIPTCENMPDGNATRPGDVLTSMSGQTIEVLNTDAEGRLILCDALTYAERFEPQAVVDVATLTGACVIALGHHASGLFSNKDSLAEELLDAGNEAYDRAWRLPLWDDYQSQLDSNFADMANIGGRAGGSITAACFLSRFAKKYDWAHLDIAGTAWKSGKEKGATGRPVPLLTEFLKQRAGK.

Residues Lys-267 and Asp-272 each coordinate Mn(2+). Residue Lys-279 is part of the active site. Residues Asp-290, Asp-349, and Glu-351 each coordinate Mn(2+). The active site involves Arg-353.

This sequence belongs to the peptidase M17 family. Mn(2+) is required as a cofactor.

The protein resides in the cytoplasm. The catalysed reaction is Release of an N-terminal amino acid, Xaa-|-Yaa-, in which Xaa is preferably Leu, but may be other amino acids including Pro although not Arg or Lys, and Yaa may be Pro. Amino acid amides and methyl esters are also readily hydrolyzed, but rates on arylamides are exceedingly low.. It catalyses the reaction Release of an N-terminal amino acid, preferentially leucine, but not glutamic or aspartic acids.. Presumably involved in the processing and regular turnover of intracellular proteins. Catalyzes the removal of unsubstituted N-terminal amino acids from various peptides. The polypeptide is Probable cytosol aminopeptidase (Methylobacillus flagellatus (strain ATCC 51484 / DSM 6875 / VKM B-1610 / KT)).